The chain runs to 489 residues: Zinc finger protein 772 (489 aa).

Residues 27–98 enclose the KRAB domain; that stretch reads VNFEDVFVYF…DWVDMTLAVA (72 aa). 10 consecutive C2H2-type zinc fingers follow at residues 144-166, 172-194, 266-288, 294-316, 322-344, 350-372, 378-400, 406-428, 434-456, and 462-484; these read YPCG…QETH, YMCV…QKQH, YKCS…QRVH, YECG…QRIH, YECG…QRVH, YKCS…ESIH, YECS…WSVH, YECI…QRVH, YVCS…HRIH, and YKCS…WKIH.

It belongs to the krueppel C2H2-type zinc-finger protein family.

It localises to the nucleus. May be involved in transcriptional regulation. In Homo sapiens (Human), this protein is Zinc finger protein 772 (ZNF772).